Reading from the N-terminus, the 332-residue chain is Putative pumilio homolog 20 (332 aa).

One can recognise a PUM-HD domain in the interval 1–332 (MAHQLRFAAA…NIASILNSIR (332 aa)). 2 Pumilio repeats span residues 89–124 (SDPD…FAAA) and 125–159 (ILRR…AMYE). The stretch at 160–191 (HILHYASHIARDKHGNLALNDIITDAYRNKLF) is one Pumilio 3; degenerate repeat. 3 Pumilio repeats span residues 192–228 (DVIA…NIVV), 229–266 (SLRG…ELME), and 267–303 (CEGD…DLFW).

The protein resides in the cytoplasm. Functionally, sequence-specific RNA-binding protein that regulates translation and mRNA stability by binding the 3'-UTR of target mRNAs. This is Putative pumilio homolog 20 (APUM20) from Arabidopsis thaliana (Mouse-ear cress).